Reading from the N-terminus, the 107-residue chain is Iron-binding protein IscA (107 aa).

Residues Cys-35, Cys-99, and Cys-101 each contribute to the Fe cation site.

It belongs to the HesB/IscA family. As to quaternary structure, homodimer; may form tetramers and higher multimers. Requires Fe cation as cofactor.

In terms of biological role, is able to transfer iron-sulfur clusters to apo-ferredoxin. Multiple cycles of [2Fe2S] cluster formation and transfer are observed, suggesting that IscA acts catalytically. Recruits intracellular free iron so as to provide iron for the assembly of transient iron-sulfur cluster in IscU in the presence of IscS, L-cysteine and the thioredoxin reductase system TrxA/TrxB. The sequence is that of Iron-binding protein IscA from Photorhabdus laumondii subsp. laumondii (strain DSM 15139 / CIP 105565 / TT01) (Photorhabdus luminescens subsp. laumondii).